Reading from the N-terminus, the 850-residue chain is Protein stoned-A (850 aa).

The segment covering 1–16 has biased composition (basic residues); that stretch reads MLKLPKGLKKKKKKSK. Disordered stretches follow at residues 1–95 and 125–164; these read MLKL…AAGG and KESF…LGQI. Residues 26–290 form an interaction with Syt region; it reads ELEQYKRDLK…QNLLLSESIE (265 aa). The span at 28–38 shows a compositional bias: basic and acidic residues; the sequence is EQYKRDLKAKQ. Positions 78-91 are enriched in polar residues; the sequence is ILNAQQQLSDQNQG. Over residues 136 to 164 the composition is skewed to basic and acidic residues; that stretch reads AEKKKQKEEEAARLEAEQQEREKQRLGQI. The short motif at 224–226 is the DPF 1 element; sequence DPF. Disordered stretches follow at residues 345–375 and 412–498; these read EEEE…EEDD and GSWA…PPFL. Over residues 431 to 440 the composition is skewed to pro residues; that stretch reads PPPPVRPPTG. The span at 451–462 shows a compositional bias: acidic residues; sequence SEDEEENPEDDP. Short sequence motifs (DPF) lie at residues 461 to 463 and 535 to 537; these read DPF. 4 disordered regions span residues 573 to 610, 634 to 673, 738 to 760, and 800 to 825; these read HSLS…QRKS, GNEL…TSHV, RKKL…FDTS, and LGLG…IDPF. 2 stretches are compositionally biased toward basic and acidic residues: residues 574-588 and 596-607; these read SLSD…DQKE and LEQKETDFDTAQ. Short sequence motifs (DPF) lie at residues 666–668, 755–757, and 823–825; these read DPF.

In terms of assembly, interacts with the second C2 domain of Syt.

It localises to the cytoplasm. Its subcellular location is the synapse. It is found in the cytoplasmic vesicle. The protein localises to the secretory vesicle. The protein resides in the synaptic vesicle. Adapter protein involved in endocytic recycling of synaptic vesicles membranes. May act by mediating the retrieval of synaptotagmin protein Syt from the plasma membrane, thereby facilitating the internalization of multiple synaptic vesicles from the plasma membrane. The polypeptide is Protein stoned-A (stnA) (Drosophila melanogaster (Fruit fly)).